A 1453-amino-acid chain; its full sequence is Chromatin remodeling regulator CECR2 (1453 aa).

The segment at 170 to 237 is disordered; the sequence is VQGRSNGELS…DLQTRNGSRG (68 aa). Over residues 197–209 the composition is skewed to basic residues; the sequence is TGKRRGRPPKRKK. Basic and acidic residues predominate over residues 210–222; it reads LQEEIISSEKQEE. A compositionally biased stretch (polar residues) spans 223-234; it reads NSLTSDLQTRNG. Serine 402 carries the post-translational modification Phosphoserine. The region spanning 414–518 is the Bromo domain; that stretch reads FELDDDFTAM…RCFHRAMTKH (105 aa). Threonine 526 is modified (phosphothreonine). Disordered stretches follow at residues 536–667, 767–796, 827–868, 884–1020, 1046–1072, 1131–1308, 1331–1368, and 1396–1453; these read EKRE…HPPF, HGTTNPGRLGPDEKPHLGPGPSHHPHTLGH, GYMQ…GESM, VCPP…DNSY, VVGEASPCRSEGKGLDGSGSEKPLCPR, LASM…YLYG, MLQTGSPYTPQRSASHFQPRAYPSPVPAHPPPHPVATQ, and QTGT…LDQS. Position 551 is a phosphoserine (serine 551). Polar residues predominate over residues 637–649; the sequence is GSLQGSDPTNLHG. Positions 655-664 are enriched in pro residues; it reads EAPPGEPLQH. Residues 887–905 are compositionally biased toward pro residues; it reads PGVPYHPRQPTPPQLPGPF. Serine 983 bears the Phosphoserine mark. The segment covering 985 to 998 has biased composition (basic and acidic residues); it reads QERETEDSQLKSDA. A compositionally biased stretch (polar residues) spans 999 to 1020; the sequence is SDSADTYKTSKNKNTWPLDNSY. An asymmetric dimethylarginine mark is found at arginine 1166 and arginine 1172. Low complexity-rich tracts occupy residues 1173–1187 and 1202–1211; these read YSYQPPSQPSYHPYQ and QRSLPSQRSP. A compositionally biased stretch (polar residues) spans 1228 to 1250; it reads NVLSSLQGCETLNTALTSPTQMD. Basic and acidic residues predominate over residues 1265 to 1289; that stretch reads GPEEEKMDESVERPESPKEFLDLDN. Residue serine 1280 is modified to Phosphoserine. 2 stretches are compositionally biased toward polar residues: residues 1291-1304 and 1331-1346; these read NAATKRQNSLSTSD and MLQTGSPYTPQRSASH. The span at 1352-1364 shows a compositional bias: pro residues; that stretch reads YPSPVPAHPPPHP.

In terms of assembly, component of the CERF-1 ISWI chromatin remodeling complex (also called the CECR2-containing remodeling factor (CERF) complex) at least composed of CECR2 and SMARCA1. Component of the CERF-5 ISWI chromatin remodeling complex at least composed of CECR2 and SMARCA5/SNF2H. LUZP1 is detected as part of the CERF-1 and CERF-5 complexes in embryonic stem (ES) cells where it is involved in complex stabilization but is not detected in the complexes in the testis. Interacts with CCAR2; CCAR2 may form part of the CERF-1 and/or CEF-5 ISWI chromatin remodeling complexes in ES cells. Interacts with acetylated lysine residues on histone H2A and H3 (in vitro). Interacts with LRPPRC.

The protein localises to the nucleus. Regulatory subunit of the ATP-dependent CERF-1 and CERF-5 ISWI chromatin remodeling complexes, which form ordered nucleosome arrays on chromatin and facilitate access to DNA during DNA-templated processes such as DNA replication, transcription, and repair. The complexes do not have the ability to slide mononucleosomes to the center of a DNA template. The CERF-1 ISWI chromatin remodeling complex has a lower ATP hydrolysis rate than the CERF-5 ISWI chromatin remodeling complex. Plays a role in various processes during development: required during embryogenesis for neural tube closure and inner ear development. In adults, required for spermatogenesis, via the formation of ISWI-type chromatin complexes. In histone-modifying complexes, CECR2 recognizes and binds acylated histones: binds histones that are acetylated and/or butyrylated. May also be involved through its interaction with LRPPRC in the integration of cytoskeletal network with vesicular trafficking, nucleocytosolic shuttling, transcription, chromosome remodeling and cytokinesis. This is Chromatin remodeling regulator CECR2 from Mus musculus (Mouse).